Consider the following 461-residue polypeptide: Photosystem II CP43 reaction center protein (461 aa).

Residues M1–E2 constitute a propeptide that is removed on maturation. Residue T3 is modified to N-acetylthreonine. T3 is subject to Phosphothreonine. 5 helical membrane passes run L57 to A81, L122 to K143, K166 to T188, R243 to S263, and W279 to A300. A [CaMn4O5] cluster-binding site is contributed by E355. Residues R435 to P459 form a helical membrane-spanning segment.

It belongs to the PsbB/PsbC family. PsbC subfamily. In terms of assembly, PSII is composed of 1 copy each of membrane proteins PsbA, PsbB, PsbC, PsbD, PsbE, PsbF, PsbH, PsbI, PsbJ, PsbK, PsbL, PsbM, PsbT, PsbY, PsbZ, Psb30/Ycf12, at least 3 peripheral proteins of the oxygen-evolving complex and a large number of cofactors. It forms dimeric complexes. Binds multiple chlorophylls and provides some of the ligands for the Ca-4Mn-5O cluster of the oxygen-evolving complex. It may also provide a ligand for a Cl- that is required for oxygen evolution. PSII binds additional chlorophylls, carotenoids and specific lipids. is required as a cofactor.

Its subcellular location is the plastid. The protein resides in the chloroplast thylakoid membrane. One of the components of the core complex of photosystem II (PSII). It binds chlorophyll and helps catalyze the primary light-induced photochemical processes of PSII. PSII is a light-driven water:plastoquinone oxidoreductase, using light energy to abstract electrons from H(2)O, generating O(2) and a proton gradient subsequently used for ATP formation. The polypeptide is Photosystem II CP43 reaction center protein (Euglena gracilis).